The chain runs to 890 residues: DNA mismatch repair protein MutS (890 aa).

Position 634–641 (Gly-634–Ser-641) interacts with ATP.

It belongs to the DNA mismatch repair MutS family.

This protein is involved in the repair of mismatches in DNA. It is possible that it carries out the mismatch recognition step. This protein has a weak ATPase activity. The protein is DNA mismatch repair protein MutS of Burkholderia pseudomallei (strain K96243).